Consider the following 715-residue polypeptide: Staphylocoagulase (715 aa).

An N-terminal signal peptide occupies residues 1–26 (MKKQIISLGALAVASSLFTWDNKADA). A compositionally biased stretch (basic and acidic residues) spans 306-327 (KYGESETKSPVVKEENKVEDPQ). Disordered stretches follow at residues 306–348 (KYGE…EETT) and 430–470 (QGTE…FNKT). The segment covering 431–443 (GTESTLKGIQGES) has biased composition (polar residues). 8 tandem repeats follow at residues 495–521 (ARPRFNKPSETNAYNVTTNQDGTVSYG), 522–548 (ARPTQNKASETNAYNVTTHANGQVSYG), 549–575 (ARPTQKKPSETNAYNVTTHANGQVSYG), 576–602 (ARPTYNKPSETNAYNVTTHGNGQVSYG), 603–629 (ARPTYKKPSKTNAYNVTTHANGQVSYG), 630–656 (ARPTQNKPSETNAYNVTTHANGQVSYG), 657–683 (ARPTQNKPSETNAYNVTTHGNGQVSYG), and 684–710 (ARPTYNKPSKTNAYNVTTHADGTATYG). Positions 495 to 710 (ARPRFNKPSE…THADGTATYG (216 aa)) are 8 X 27 AA tandem repeats of A-R-P-[RT]-[FQY]-[NK]-K-[PA]-S-[EK]-T-N-A-Y-N-V-T-T-[NH]-[QAG]-[DN]-G-[TQ]-[VA]-[ST]-Y-G. The interval 674–697 (THGNGQVSYGARPTYNKPSKTNAY) is disordered.

This sequence belongs to the staphylocoagulase family.

Functionally, staphylocoagulase is an extracellular protein which specifically forms a complex with human prothrombin. This complex named staphylothrombin can clot fibrinogen without any proteolytic cleavage of prothrombin. The protein is Staphylocoagulase of Staphylococcus aureus.